The sequence spans 299 residues: Ribosomal RNA small subunit methyltransferase H (299 aa).

Residues 36–38, Asp-55, Asp-103, and Gln-110 contribute to the S-adenosyl-L-methionine site; that span reads GGH. Basic and acidic residues-rich tracts occupy residues 268-282 and 289-299; these read KPVR…ENPR and RAAERIEKGGD. The disordered stretch occupies residues 268–299; sequence KPVRPSEEEIRENPRARSGRLRAAERIEKGGD.

The protein belongs to the methyltransferase superfamily. RsmH family.

It is found in the cytoplasm. The catalysed reaction is cytidine(1402) in 16S rRNA + S-adenosyl-L-methionine = N(4)-methylcytidine(1402) in 16S rRNA + S-adenosyl-L-homocysteine + H(+). In terms of biological role, specifically methylates the N4 position of cytidine in position 1402 (C1402) of 16S rRNA. This chain is Ribosomal RNA small subunit methyltransferase H, found in Thermotoga petrophila (strain ATCC BAA-488 / DSM 13995 / JCM 10881 / RKU-1).